The following is a 195-amino-acid chain: MELNTHNAEILLSAANKSHYPQDELPEIALAGRSNVGKSSFINTMLNRKNLARTSGKPGKTQLLNFFNIDDKMRFVDVPGYGYARVSKKEREKWGCMIEEYLTTRENLRAVVSLVDLRHDPSADDVQMYEFLKYYEIPVIIVATKADKIPRGKWNKHESAIKKKLNFDPSDDFILFSSVSKAGMDEAWDAILEKL.

Residues 24 to 195 (ELPEIALAGR…EAWDAILEKL (172 aa)) form the EngB-type G domain. Residues 32 to 39 (GRSNVGKS), 59 to 63 (GKTQL), 77 to 80 (DVPG), 144 to 147 (TKAD), and 176 to 178 (FSS) contribute to the GTP site. Mg(2+) is bound by residues Ser39 and Thr61.

The protein belongs to the TRAFAC class TrmE-Era-EngA-EngB-Septin-like GTPase superfamily. EngB GTPase family. It depends on Mg(2+) as a cofactor.

Its function is as follows. Necessary for normal cell division and for the maintenance of normal septation. The chain is Probable GTP-binding protein EngB from Streptococcus pneumoniae serotype 4 (strain ATCC BAA-334 / TIGR4).